A 194-amino-acid chain; its full sequence is Ion-translocating oxidoreductase complex subunit A (194 aa).

The next 6 helical transmembrane spans lie at 4-24 (LVLI…QFLG), 39-59 (IGLS…SYLV), 71-91 (FLRT…TEMV), 102-122 (VLGI…VALL), 131-151 (FITA…VLVL), and 172-192 (AIGM…AGLI).

It belongs to the NqrDE/RnfAE family. The complex is composed of six subunits: RnfA, RnfB, RnfC, RnfD, RnfE and RnfG.

The protein localises to the cell inner membrane. Functionally, part of a membrane-bound complex that couples electron transfer with translocation of ions across the membrane. The sequence is that of Ion-translocating oxidoreductase complex subunit A from Ectopseudomonas mendocina (strain ymp) (Pseudomonas mendocina).